A 329-amino-acid chain; its full sequence is Methionyl-tRNA formyltransferase (329 aa).

117–120 contacts (6S)-5,6,7,8-tetrahydrofolate; that stretch reads SLLP.

Belongs to the Fmt family.

The catalysed reaction is L-methionyl-tRNA(fMet) + (6R)-10-formyltetrahydrofolate = N-formyl-L-methionyl-tRNA(fMet) + (6S)-5,6,7,8-tetrahydrofolate + H(+). In terms of biological role, attaches a formyl group to the free amino group of methionyl-tRNA(fMet). The formyl group appears to play a dual role in the initiator identity of N-formylmethionyl-tRNA by promoting its recognition by IF2 and preventing the misappropriation of this tRNA by the elongation apparatus. The chain is Methionyl-tRNA formyltransferase from Paracidovorax citrulli (strain AAC00-1) (Acidovorax citrulli).